A 585-amino-acid chain; its full sequence is Rhizobactin siderophore biosynthesis protein RhbC (585 aa).

This sequence belongs to the IucA/IucC family.

It functions in the pathway siderophore biosynthesis; rhizobactin biosynthesis. The polypeptide is Rhizobactin siderophore biosynthesis protein RhbC (rhbC) (Rhizobium meliloti (strain 1021) (Ensifer meliloti)).